A 528-amino-acid polypeptide reads, in one-letter code: Drimenol cyclase drtB (528 aa).

It belongs to the HAD-like hydrolase superfamily.

It carries out the reaction (2E,6E)-farnesyl diphosphate + H2O = (5S,9S,10S)-drim-7-en-11-ol + diphosphate. The protein operates within secondary metabolite biosynthesis; terpenoid biosynthesis. Its function is as follows. Drimenol cyclase; part of the gene cluster that mediates the biosynthesis of various drimane-type sesquiterpene esters, compounds that exhibit diverse biological activities and are widely present in eukaryotes. The pathway begins with the synthesis of the backbone drimenol by the terpene cyclase drtB using farnesyl pyrophosphate (FPP) as substrate. The cytochrome P450 monooxygenase drtD is then responsible for the hydroxylations at C-6, C-9 and C-12, as well as the oxidation of hydroxyl groups at C-6 and C-11 to a ketone and an aldehyde, respectively. Then, the biosynthesis can go in two directions, either the hydroxylated drimenol is further hydroxylated at C-2 and C-3 by an enzyme(s) not associated with the drt cluster, or the FAD-binding oxidoreductase drtC further oxidizes C-11 or C-12 to form the butyrolactone ring. DrtB, drtD and drtC are solely responsible for the formation of the different drimane structures observed during drimane sesquiterpenes biosynthesis. The polyketide synthase drtA synthesizes different lengths (C6 and C8) of PKS chains, which are then oxidized to varying degrees by the short-chain dehydrogenase drtF. Finally, these PKS chains are transferred onto drimane sesquiterpenes by the acyltransferase drtE, forming the sesquiterpene esters. In addition to the different fatty acyl-CoA chains produced by drtA, drtE is also able to use cinnamoyl-CoA as a substrate. The sequence is that of Drimenol cyclase drtB from Aspergillus calidoustus.